Here is a 384-residue protein sequence, read N- to C-terminus: Heparin lyase I (384 aa).

An N-terminal signal peptide occupies residues 1 to 21 (MKKQILYLIVLQQLFLCSAYA). Position 22 is a blocked amino end (Gln) (Gln22). O-linked (Man...) serine glycosylation is present at Ser39.

As to quaternary structure, monomer. Post-translationally, the N-terminus is blocked.

It is found in the periplasm. It carries out the reaction Eliminative cleavage of polysaccharides containing (1-&gt;4)-linked D-glucuronate or L-iduronate residues and (1-&gt;4)-alpha-linked 2-sulfoamino-2-deoxy-6-sulfo-D-glucose residues to give oligosaccharides with terminal 4-deoxy-alpha-D-gluc-4-enuronosyl groups at their non-reducing ends.. Its function is as follows. Degrades heparin and heparan sulfate. Also implicated in the release of heparin-bound growth factors from the extracellular matrix. The chain is Heparin lyase I from Pedobacter heparinus (Flavobacterium heparinum).